The chain runs to 334 residues: N-acetylmuramoyl-L-alanine amidase sle1 (334 aa).

Residues 1–25 (MQKKVIAAIIGTSAISAVAATQANA) form the signal peptide. The 44-residue stretch at 27–70 (TTHTVKPGESVWAISNKYGISIAKLKSLNNLTSNLIFPNQVLKV) folds into the LysM 1 domain. Low complexity predominate over residues 71-86 (SGSSNSTSNSSRPSTN). The interval 71-90 (SGSSNSTSNSSRPSTNSGGG) is disordered. LysM domains follow at residues 91-134 (SYYT…KLKV) and 158-201 (SYYT…KLKV). The region spanning 210 to 334 (GSATTTNRGY…YQVNNYRYIH (125 aa)) is the Peptidase C51 domain.

The protein localises to the secreted. The protein resides in the cell surface. The enzyme catalyses Hydrolyzes the link between N-acetylmuramoyl residues and L-amino acid residues in certain cell-wall glycopeptides.. Its function is as follows. Peptidoglycan hydrolase involved in the splitting of the septum during cell division. In Staphylococcus aureus (strain USA300), this protein is N-acetylmuramoyl-L-alanine amidase sle1 (sle1).